We begin with the raw amino-acid sequence, 1040 residues long: Eukaryotic translation initiation factor 3 subunit A (1040 aa).

Positions 92-121 (LKKFIELAEKKVTEAQTKADEIQSSLESAA) form a coiled coil. The PCI domain occupies 339-523 (MTKAASFVLL…GVLTFDSDVF (185 aa)). The stretch at 608–906 (RVIIEKKKEA…AEARRAARKA (299 aa)) forms a coiled coil. Basic and acidic residues-rich tracts occupy residues 617–632 (AATD…EETR) and 795–901 (EVSE…EARR). Disordered stretches follow at residues 617 to 641 (AATD…QQLQ) and 795 to 1040 (EVSE…QQNQ). 4 stretches are compositionally biased toward low complexity: residues 908–917 (LEPAAPAARP), 945–955 (KEAAGGAAPEA), 978–993 (SGSS…NGAP), and 1004–1018 (SSSS…TPGS).

This sequence belongs to the eIF-3 subunit A family. Component of the eukaryotic translation initiation factor 3 (eIF-3) complex.

Its subcellular location is the cytoplasm. RNA-binding component of the eukaryotic translation initiation factor 3 (eIF-3) complex, which is involved in protein synthesis of a specialized repertoire of mRNAs and, together with other initiation factors, stimulates binding of mRNA and methionyl-tRNAi to the 40S ribosome. The eIF-3 complex specifically targets and initiates translation of a subset of mRNAs involved in cell proliferation. This chain is Eukaryotic translation initiation factor 3 subunit A (tif32), found in Aspergillus terreus (strain NIH 2624 / FGSC A1156).